Reading from the N-terminus, the 637-residue chain is Probable potassium transport system protein Kup (637 aa).

12 helical membrane passes run 24–44 (LAIAAIGVVFGDIGTSPLYAL), 64–84 (VISLLFWAIILVVGIKYLLFV), 113–133 (AGALMALGIFGACMFYGDAVI), 151–171 (PHLSHLVLPITIVILIALFWI), 182–202 (LFGPIMVVWFVVIAALGVYHI), 225–245 (LLQAYVVLGSVVLVLTGAEAL), 261–281 (AYGLVMPSLVLNYFGQGALLI), 290–310 (PFFLLAPEWALLPLVVLSTVA), 351–371 (IYVPVVNWLLLFVILCIVIGF), 381–401 (YGIAVTATMVITTVLACVVMV), 409–429 (LLVGAIIAIFLAIDLGFFGAN), and 433–453 (VAQGGWLPLGIGALLFFLLMT).

It belongs to the HAK/KUP transporter (TC 2.A.72) family.

The protein localises to the cell inner membrane. It catalyses the reaction K(+)(in) + H(+)(in) = K(+)(out) + H(+)(out). In terms of biological role, transport of potassium into the cell. Likely operates as a K(+):H(+) symporter. This Burkholderia ambifaria (strain MC40-6) protein is Probable potassium transport system protein Kup.